The primary structure comprises 342 residues: tRNA N6-adenosine threonylcarbamoyltransferase (342 aa).

Fe cation contacts are provided by H111 and H115. Residues 134-138, D167, G180, and N277 contribute to the substrate site; that span reads LVSGG. D305 contributes to the Fe cation binding site.

It belongs to the KAE1 / TsaD family. Fe(2+) is required as a cofactor.

It is found in the cytoplasm. It carries out the reaction L-threonylcarbamoyladenylate + adenosine(37) in tRNA = N(6)-L-threonylcarbamoyladenosine(37) in tRNA + AMP + H(+). In terms of biological role, required for the formation of a threonylcarbamoyl group on adenosine at position 37 (t(6)A37) in tRNAs that read codons beginning with adenine. Is involved in the transfer of the threonylcarbamoyl moiety of threonylcarbamoyl-AMP (TC-AMP) to the N6 group of A37, together with TsaE and TsaB. TsaD likely plays a direct catalytic role in this reaction. The polypeptide is tRNA N6-adenosine threonylcarbamoyltransferase (Haemophilus influenzae (strain ATCC 51907 / DSM 11121 / KW20 / Rd)).